The chain runs to 309 residues: Protein phosphatase 1 regulatory subunit 42 (309 aa).

7 LRR repeats span residues 29–50 (KITH…SLCK), 51–72 (NLSV…NYAT), 73–94 (NLTH…RSLK), 95–116 (KLEK…EGLG), 117–138 (ELRE…LFDP), 147–168 (SLCI…ELLE), and 169–190 (NLNQ…EFLL). Residues 204–242 (NPVCLKPKYRDRLILVSKSLEFLDGKEIKNIERQFLMNW) form the LRRCT domain.

As to quaternary structure, interacts with PPP1CC isoform gamma-2; the interaction is direct. Interacts with actin, dynein, KIF5B, KIFC1 and tubulin. Associates with microtubules. Phosphorylated; in the testis.

It is found in the cytoplasm. The protein resides in the cytoskeleton. It localises to the microtubule organizing center. The protein localises to the centrosome. Regulates phosphatase activity of protein phosphatase 1 (PP1) complexes in the testis. This chain is Protein phosphatase 1 regulatory subunit 42, found in Homo sapiens (Human).